The sequence spans 239 residues: tRNA (guanine-N(1)-)-methyltransferase (239 aa).

S-adenosyl-L-methionine contacts are provided by residues Gly-109 and 128–133; that span reads IGDYVL.

It belongs to the RNA methyltransferase TrmD family. As to quaternary structure, homodimer.

It is found in the cytoplasm. It carries out the reaction guanosine(37) in tRNA + S-adenosyl-L-methionine = N(1)-methylguanosine(37) in tRNA + S-adenosyl-L-homocysteine + H(+). Functionally, specifically methylates guanosine-37 in various tRNAs. This is tRNA (guanine-N(1)-)-methyltransferase from Thermus thermophilus (strain ATCC BAA-163 / DSM 7039 / HB27).